The chain runs to 413 residues: Docking protein 2 (413 aa).

The 111-residue stretch at 4–114 folds into the PH domain; the sequence is VVVKQGFLYL…WIQAICLLAF (111 aa). In terms of domain architecture, IRS-type PTB spans 147–252; the sequence is PQKEFAVTVR…SAQKNAAPPG (106 aa). A disordered region spans residues 247 to 292; it reads NAAPPGPQTQPVPVPAVLPRPESPYARPHDSLPPPSPTVPVPTPRQ. The span at 250–268 shows a compositional bias: pro residues; that stretch reads PPGPQTQPVPVPAVLPRPE. The residue at position 271 (Tyr-271) is a Phosphotyrosine. A compositionally biased stretch (pro residues) spans 277 to 289; sequence SLPPPSPTVPVPT. 2 positions are modified to phosphotyrosine: Tyr-300 and Tyr-346. Residues 362-381 are compositionally biased toward basic and acidic residues; it reads QEPRGEAWRRQATADRDSSG. The interval 362-383 is disordered; that stretch reads QEPRGEAWRRQATADRDSSGLK.

The protein belongs to the DOK family. Type A subfamily. In terms of assembly, interacts with phosphorylated RASGAP and EGFR. Interacts with RET and NCK. Interacts (via PH domain) with TEK/TIE2 (tyrosine phosphorylated). In terms of processing, on immunoreceptor stimulation, phosphorylated on C-terminal tyrosine residues. Phosphorylation on Tyr-346 is required for binding to the SH2 domain of NCK. Phosphorylation on both Tyr-271 and Tyr-300 is required for interaction with RASGAP. Phosphorylated on tyrosine residues by TEK/TIE2.

DOK proteins are enzymatically inert adaptor or scaffolding proteins. They provide a docking platform for the assembly of multimolecular signaling complexes. DOK2 may modulate the cellular proliferation induced by IL-4, as well as IL-2 and IL-3. May be involved in modulating Bcr-Abl signaling. Attenuates EGF-stimulated MAP kinase activation. The sequence is that of Docking protein 2 (DOK2) from Bos taurus (Bovine).